Here is a 147-residue protein sequence, read N- to C-terminus: Lipoprotein signal peptidase (147 aa).

4 consecutive transmembrane segments (helical) span residues 10–30, 34–54, 59–79, and 87–107; these read ISIF…IKFL, GIVK…GTAF, FLGS…LVYM, and WFIY…RLIY. Residues Asp112 and Asp130 contribute to the active site. A helical transmembrane segment spans residues 121–141; sequence LHWPAFNVADSAISIGIVLFV.

The protein belongs to the peptidase A8 family.

Its subcellular location is the cell inner membrane. The enzyme catalyses Release of signal peptides from bacterial membrane prolipoproteins. Hydrolyzes -Xaa-Yaa-Zaa-|-(S,diacylglyceryl)Cys-, in which Xaa is hydrophobic (preferably Leu), and Yaa (Ala or Ser) and Zaa (Gly or Ala) have small, neutral side chains.. It functions in the pathway protein modification; lipoprotein biosynthesis (signal peptide cleavage). Functionally, this protein specifically catalyzes the removal of signal peptides from prolipoproteins. The chain is Lipoprotein signal peptidase from Thermodesulfovibrio yellowstonii (strain ATCC 51303 / DSM 11347 / YP87).